Here is a 155-residue protein sequence, read N- to C-terminus: Transcriptional repressor NrdR (155 aa).

Residues 3-34 (CPFCGHSNTQVLDTRMSEDGDAVRRRRRCEAC) fold into a zinc finger. Positions 49-139 (PAIVKKNGSR…VYRSFEDVSE (91 aa)) constitute an ATP-cone domain.

This sequence belongs to the NrdR family. Requires Zn(2+) as cofactor.

Functionally, negatively regulates transcription of bacterial ribonucleotide reductase nrd genes and operons by binding to NrdR-boxes. This Cupriavidus necator (strain ATCC 17699 / DSM 428 / KCTC 22496 / NCIMB 10442 / H16 / Stanier 337) (Ralstonia eutropha) protein is Transcriptional repressor NrdR.